The primary structure comprises 155 residues: Regulatory protein RecX (155 aa).

Belongs to the RecX family.

The protein localises to the cytoplasm. Its function is as follows. Modulates RecA activity. The polypeptide is Regulatory protein RecX (Vibrio campbellii (strain ATCC BAA-1116)).